A 129-amino-acid chain; its full sequence is Tumor necrosis factor receptor superfamily member 12A (129 aa).

The signal sequence occupies residues 1–27 (MASAWPRSLPQILVLGFGLVLMRAAAG). The Extracellular portion of the chain corresponds to 28–80 (EQAPGTSPCSSGSSWSADLDKCMDCASCPARPHSDFCLGCAAAPPAHFRLLWP). Disulfide bonds link cysteine 36/cysteine 49, cysteine 52/cysteine 67, and cysteine 55/cysteine 64. The TNFR-Cys; atypical repeat unit spans residues 36 to 67 (CSSGSSWSADLDKCMDCASCPARPHSDFCLGC). A helical transmembrane segment spans residues 81 to 101 (ILGGALSLVLVLALVSSFLVW). The Cytoplasmic portion of the chain corresponds to 102-129 (RRCRRREKFTTPIEETGGEGCPGVALIQ).

In terms of assembly, associates with TRAF1 and TRAF2, and probably also with TRAF3. In terms of tissue distribution, highly expressed in fetal heart, intestine, kidney, liver, lung and skin, and in adult heart and ovary. Intermediate expression in adult kidney, lung and skin.

It is found in the membrane. Receptor for TNFSF12/TWEAK. Weak inducer of apoptosis in some cell types. Promotes angiogenesis and the proliferation of endothelial cells. May modulate cellular adhesion to matrix proteins. The protein is Tumor necrosis factor receptor superfamily member 12A (Tnfrsf12a) of Mus musculus (Mouse).